Reading from the N-terminus, the 240-residue chain is Ribonuclease 3 (240 aa).

The region spanning 9 to 141 (VEELQKRLGV…LLAALYLDQG (133 aa)) is the RNase III domain. Glutamate 54 is a Mg(2+) binding site. Residue aspartate 58 is part of the active site. Positions 127 and 130 each coordinate Mg(2+). Glutamate 130 is an active-site residue. One can recognise a DRBM domain in the interval 168-237 (DYKTALQEIV…ARKAYEKLVA (70 aa)).

The protein belongs to the ribonuclease III family. In terms of assembly, homodimer. It depends on Mg(2+) as a cofactor.

The protein resides in the cytoplasm. The enzyme catalyses Endonucleolytic cleavage to 5'-phosphomonoester.. Digests double-stranded RNA. Involved in the processing of primary rRNA transcript to yield the immediate precursors to the large and small rRNAs (23S and 16S). Processes some mRNAs, and tRNAs when they are encoded in the rRNA operon. Processes pre-crRNA and tracrRNA of type II CRISPR loci if present in the organism. This is Ribonuclease 3 from Thermotoga neapolitana (strain ATCC 49049 / DSM 4359 / NBRC 107923 / NS-E).